A 164-amino-acid chain; its full sequence is Phosphopantetheine adenylyltransferase (164 aa).

Ser-9 is a binding site for substrate. ATP contacts are provided by residues 9 to 10 and His-17; that span reads SF. Substrate contacts are provided by Lys-41, Leu-73, and Lys-87. Residues 88–90, Glu-98, and 123–129 each bind ATP; these read GLR and YSYLSSS.

Belongs to the bacterial CoaD family. Homohexamer. The cofactor is Mg(2+).

The protein localises to the cytoplasm. The enzyme catalyses (R)-4'-phosphopantetheine + ATP + H(+) = 3'-dephospho-CoA + diphosphate. It participates in cofactor biosynthesis; coenzyme A biosynthesis; CoA from (R)-pantothenate: step 4/5. Reversibly transfers an adenylyl group from ATP to 4'-phosphopantetheine, yielding dephospho-CoA (dPCoA) and pyrophosphate. The chain is Phosphopantetheine adenylyltransferase from Clostridium botulinum (strain 657 / Type Ba4).